We begin with the raw amino-acid sequence, 180 residues long: Putative pre-16S rRNA nuclease (180 aa).

The span at 1-12 (MDAQERSERPDP) shows a compositional bias: basic and acidic residues. A disordered region spans residues 1–23 (MDAQERSERPDPATDPGRGRRLG).

It belongs to the YqgF nuclease family.

It localises to the cytoplasm. Could be a nuclease involved in processing of the 5'-end of pre-16S rRNA. In Nocardia farcinica (strain IFM 10152), this protein is Putative pre-16S rRNA nuclease.